Consider the following 529-residue polypeptide: MFS glucose transporter mfs1 (529 aa).

12 consecutive transmembrane segments (helical) span residues 7 to 27, 52 to 72, 86 to 106, 109 to 129, 138 to 158, 179 to 199, 272 to 292, 301 to 321, 330 to 350, 375 to 395, 415 to 439, and 446 to 464; these read VYFLCGFATLGGGLFGFDISS, SITCAMPFGSLVGALCSSFIA, ILWIIGSIFMCASNGIPLLVV, VIAGGCVGIASAMVPVYQAEI, VISLQQWAITWGILIQYFIQY, IPWGIQIVPGVILFFGMFLFP, LQMWSQLCGMNVMMYYIVYIM, LLTASIQYILNTALTLPAIIY, AILIGFFLQAIFLYLEGGLQG, AVGKAIIALSYLFVCSFATTI, AVSLATASNWIWNCLLALFVPPLLW, and YMIFAAFNTAAFIHMFLTA.

Belongs to the major facilitator superfamily. Sugar transporter (TC 2.A.1.1) family.

The protein localises to the membrane. Functionally, probable MFS glucose transporter; part of the gene cluster 27 that mediates the biosynthesis of asparasone A, a sclerotium-specific anthraquinone pigment important for sclerotial survival. The protein is MFS glucose transporter mfs1 of Aspergillus flavus (strain ATCC 200026 / FGSC A1120 / IAM 13836 / NRRL 3357 / JCM 12722 / SRRC 167).